The sequence spans 555 residues: Vacuolar fusion protein MON1 homolog A (555 aa).

Residues 1-12 (MAADMQRKRSSE) are compositionally biased toward basic and acidic residues. The tract at residues 1 to 90 (MAADMQRKRS…PPLATDMRQI (90 aa)) is disordered. Phosphoserine is present on residues serine 31 and serine 56. At threonine 61 the chain carries Phosphothreonine. Serine 91 carries the post-translational modification Phosphoserine. A disordered region spans residues 112–149 (MLPGSSEDWPESPGAARRPATEPPRDGAGEGDEEEAAE). The span at 130–139 (PATEPPRDGA) shows a compositional bias: basic and acidic residues.

Belongs to the MON1/SAND family. Interacts with CCZ1. Found in a complex with RMC1, CCZ1, MON1A and MON1B. The MON1A-CCZ1B complex interacts with RIMOC1. The MON1A-CCZ1B complex interacts with RAB7A and this interaction is enhanced in the presence of RIMOC1.

In terms of biological role, plays an important role in membrane trafficking through the secretory apparatus. Not involved in endocytic trafficking to lysosomes. Acts in concert with CCZ1, as a guanine exchange factor (GEF) for RAB7, promotes the exchange of GDP to GTP, converting it from an inactive GDP-bound form into an active GTP-bound form. This chain is Vacuolar fusion protein MON1 homolog A (MON1A), found in Bos taurus (Bovine).